We begin with the raw amino-acid sequence, 403 residues long: Chromatin structure-remodeling complex subunit rsc58 (403 aa).

The segment covering 376 to 389 (SLSMNGSLSPSSTN) has biased composition (low complexity). Residues 376 to 403 (SLSMNGSLSPSSTNVPLQSYRRTTKSRR) form a disordered region. S384 bears the Phosphoserine mark.

Component of the RSC complex composed of at least arp9, arp42, rsc1, rsc4, rsc7, rsc9, rsc58, sfh1, snf21, ssr1, ssr2, ssr3 and ssr4. The complex interacts with histone and histone variant components of centromeric chromatin.

It is found in the cytoplasm. The protein localises to the nucleus. Component of the chromatin structure remodeling complex (RSC), which is involved in transcription regulation and nucleosome positioning. Controls particularly membrane and organelle development genes. In Schizosaccharomyces pombe (strain 972 / ATCC 24843) (Fission yeast), this protein is Chromatin structure-remodeling complex subunit rsc58 (rsc58).